A 446-amino-acid chain; its full sequence is D-inositol 3-phosphate glycosyltransferase (446 aa).

The interval M1 to L21 is disordered. H34 serves as a coordination point for 1D-myo-inositol 3-phosphate. UDP-N-acetyl-alpha-D-glucosamine-binding positions include Q40–P41 and G48. Residues D45–N50, K103, Y136, T160, and R180 each bind 1D-myo-inositol 3-phosphate. Positions 255, 260, and 321 each coordinate UDP-N-acetyl-alpha-D-glucosamine. Mg(2+) contacts are provided by F330, R331, and A333. E343 and E351 together coordinate UDP-N-acetyl-alpha-D-glucosamine. T357 provides a ligand contact to Mg(2+).

This sequence belongs to the glycosyltransferase group 1 family. MshA subfamily. As to quaternary structure, homodimer.

The enzyme catalyses 1D-myo-inositol 3-phosphate + UDP-N-acetyl-alpha-D-glucosamine = 1D-myo-inositol 2-acetamido-2-deoxy-alpha-D-glucopyranoside 3-phosphate + UDP + H(+). Its function is as follows. Catalyzes the transfer of a N-acetyl-glucosamine moiety to 1D-myo-inositol 3-phosphate to produce 1D-myo-inositol 2-acetamido-2-deoxy-glucopyranoside 3-phosphate in the mycothiol biosynthesis pathway. In Streptomyces scabiei (strain 87.22), this protein is D-inositol 3-phosphate glycosyltransferase.